Consider the following 238-residue polypeptide: Adenylate dimethylallyltransferase (238 aa).

This sequence belongs to the isopentenyl transferase family.

The catalysed reaction is dimethylallyl diphosphate + AMP = N(6)-(dimethylallyl)adenosine 5'-phosphate + diphosphate. Functionally, transfers dimethylallyl groups to AMP as part of the biosynthesis of cytokinin phytohormones. This is Adenylate dimethylallyltransferase (tzs) from Ralstonia nicotianae (strain ATCC BAA-1114 / GMI1000) (Ralstonia solanacearum).